The chain runs to 324 residues: Adducin-related protein C1289.14 (324 aa).

The protein belongs to the aldolase class II family. Adducin subfamily.

In Schizosaccharomyces pombe (strain 972 / ATCC 24843) (Fission yeast), this protein is Adducin-related protein C1289.14.